Consider the following 78-residue polypeptide: MSRRCQVRGTKPEFGNNVSHSQRHTKRRWNPNIQKKRYWVPSLGRKVTLTLTPKAIKEIDRRGVDIVVAEMLTRGEKI.

Residues 1–28 (MSRRCQVRGTKPEFGNNVSHSQRHTKRR) are disordered.

The protein belongs to the bacterial ribosomal protein bL28 family.

In Cutibacterium acnes (strain DSM 16379 / KPA171202) (Propionibacterium acnes), this protein is Large ribosomal subunit protein bL28.